Reading from the N-terminus, the 218-residue chain is MMP 1-O-methyltransferase (218 aa).

S-adenosyl-L-methionine is bound by residues Phe-20, Gly-46, Ser-52, Asp-71, Gly-75, and Ser-124. Asp-141 contributes to the Mg(2+) binding site. Residue His-144 is the Proton acceptor of the active site. Arg-151 contributes to the S-adenosyl-L-methionine binding site. 2 residues coordinate Mg(2+): His-169 and Asp-170.

Belongs to the methyltransferase superfamily. As to quaternary structure, homodimer. The cofactor is Mg(2+).

The catalysed reaction is 3,3'-di-O-methyl-4alpha-mannobiose + S-adenosyl-L-methionine = 1,3,3'-tri-O-methyl-4alpha-mannobiose + S-adenosyl-L-homocysteine + H(+). Inhibited by EDTA. Its function is as follows. Involved in the biosynthesis of 3-O-methylmannose polysaccharides (MMP), which are intracellular polymethylated polysaccharides implicated in the modulation of fatty acid metabolism in non-tuberculous mycobacteria. Specifically methylates the 1-OH position of 3,3'-di-O-methyl-4alpha-mannobiose, a probable early precursor of MMP, yielding the reducing end dimannoside of MMP. The chain is MMP 1-O-methyltransferase from Mycolicibacterium hassiacum (strain DSM 44199 / CIP 105218 / JCM 12690 / 3849) (Mycobacterium hassiacum).